The following is a 66-amino-acid chain: Cold shock protein 2 (66 aa).

A CSD domain is found at 4-63; the sequence is GTVKWFNADKGFGFITGEDGTDVFVHFSAIQTDGFKTLDEGQKVTYDEEQGDRGPQATNV.

It is found in the cytoplasm. This is Cold shock protein 2 (cspL) from Lactiplantibacillus plantarum (strain ATCC BAA-793 / NCIMB 8826 / WCFS1) (Lactobacillus plantarum).